The following is an 81-amino-acid chain: Pyruvate synthase subunit PorD (81 aa).

4Fe-4S ferredoxin-type domains are found at residues 25–50 (FKPV…GCIN) and 51–80 (REHE…MERE). [4Fe-4S] cluster contacts are provided by Cys34, Cys37, Cys40, Cys44, Cys60, Cys63, Cys66, and Cys70.

Heterotetramer of one alpha, one beta, one delta and one gamma chain. [4Fe-4S] cluster is required as a cofactor.

The chain is Pyruvate synthase subunit PorD (porD) from Methanothermobacter thermautotrophicus (strain ATCC 29096 / DSM 1053 / JCM 10044 / NBRC 100330 / Delta H) (Methanobacterium thermoautotrophicum).